A 358-amino-acid polypeptide reads, in one-letter code: Phenylalanine--tRNA ligase alpha subunit (358 aa).

Mg(2+) is bound at residue E258.

It belongs to the class-II aminoacyl-tRNA synthetase family. Phe-tRNA synthetase alpha subunit type 1 subfamily. In terms of assembly, tetramer of two alpha and two beta subunits. Mg(2+) serves as cofactor.

Its subcellular location is the cytoplasm. It catalyses the reaction tRNA(Phe) + L-phenylalanine + ATP = L-phenylalanyl-tRNA(Phe) + AMP + diphosphate + H(+). This is Phenylalanine--tRNA ligase alpha subunit from Rhodospirillum rubrum (strain ATCC 11170 / ATH 1.1.1 / DSM 467 / LMG 4362 / NCIMB 8255 / S1).